A 136-amino-acid chain; its full sequence is Large ribosomal subunit protein uL16 (136 aa).

This sequence belongs to the universal ribosomal protein uL16 family. Part of the 50S ribosomal subunit.

Its function is as follows. Binds 23S rRNA and is also seen to make contacts with the A and possibly P site tRNAs. In Shewanella loihica (strain ATCC BAA-1088 / PV-4), this protein is Large ribosomal subunit protein uL16.